The primary structure comprises 357 residues: UDP-N-acetylglucosamine--N-acetylmuramyl-(pentapeptide) pyrophosphoryl-undecaprenol N-acetylglucosamine transferase (357 aa).

UDP-N-acetyl-alpha-D-glucosamine-binding positions include 13-15, R166, S197, and Q292; that span reads SAG.

The protein belongs to the glycosyltransferase 28 family. MurG subfamily.

The protein resides in the cell membrane. The enzyme catalyses di-trans,octa-cis-undecaprenyl diphospho-N-acetyl-alpha-D-muramoyl-L-alanyl-D-glutamyl-meso-2,6-diaminopimeloyl-D-alanyl-D-alanine + UDP-N-acetyl-alpha-D-glucosamine = di-trans,octa-cis-undecaprenyl diphospho-[N-acetyl-alpha-D-glucosaminyl-(1-&gt;4)]-N-acetyl-alpha-D-muramoyl-L-alanyl-D-glutamyl-meso-2,6-diaminopimeloyl-D-alanyl-D-alanine + UDP + H(+). The protein operates within cell wall biogenesis; peptidoglycan biosynthesis. Cell wall formation. Catalyzes the transfer of a GlcNAc subunit on undecaprenyl-pyrophosphoryl-MurNAc-pentapeptide (lipid intermediate I) to form undecaprenyl-pyrophosphoryl-MurNAc-(pentapeptide)GlcNAc (lipid intermediate II). The polypeptide is UDP-N-acetylglucosamine--N-acetylmuramyl-(pentapeptide) pyrophosphoryl-undecaprenol N-acetylglucosamine transferase (Clostridium novyi (strain NT)).